Reading from the N-terminus, the 213-residue chain is Large ribosomal subunit protein uL3 (213 aa).

This sequence belongs to the universal ribosomal protein uL3 family. Part of the 50S ribosomal subunit. Forms a cluster with proteins L14 and L19.

In terms of biological role, one of the primary rRNA binding proteins, it binds directly near the 3'-end of the 23S rRNA, where it nucleates assembly of the 50S subunit. This chain is Large ribosomal subunit protein uL3, found in Kosmotoga olearia (strain ATCC BAA-1733 / DSM 21960 / TBF 19.5.1).